The chain runs to 757 residues: Protein transport protein SEC23-2 (757 aa).

Zn(2+) is bound by residues Cys-56, Cys-61, Cys-80, and Cys-83.

It belongs to the SEC23/SEC24 family. SEC23 subfamily. In terms of assembly, the COPII coat is composed of at least 5 proteins: the SEC23/24 complex, the SEC13/31 complex, and the protein SAR1.

The protein resides in the cytoplasm. It localises to the cytoplasmic vesicle. It is found in the COPII-coated vesicle membrane. The protein localises to the endoplasmic reticulum membrane. Its subcellular location is the golgi apparatus membrane. Component of the coat protein complex II (COPII) which promotes the formation of transport vesicles from the endoplasmic reticulum (ER). The coat has two main functions, the physical deformation of the endoplasmic reticulum membrane into vesicles and the selection of cargo molecules. This is Protein transport protein SEC23-2 (SEC232) from Candida glabrata (strain ATCC 2001 / BCRC 20586 / JCM 3761 / NBRC 0622 / NRRL Y-65 / CBS 138) (Yeast).